Reading from the N-terminus, the 209-residue chain is 8-oxoguanine DNA glycosylase/AP lyase (209 aa).

Active-site residues include lysine 132 and aspartate 150.

Belongs to the type-2 OGG1 family.

It catalyses the reaction 2'-deoxyribonucleotide-(2'-deoxyribose 5'-phosphate)-2'-deoxyribonucleotide-DNA = a 3'-end 2'-deoxyribonucleotide-(2,3-dehydro-2,3-deoxyribose 5'-phosphate)-DNA + a 5'-end 5'-phospho-2'-deoxyribonucleoside-DNA + H(+). Its function is as follows. Catalyzes the excision of an oxidatively damaged form of guanine (7,8-dihydro-8-oxoguanine = 8-oxoG) from DNA. Also cleaves the DNA backbone at apurinic/apyrimidinic sites (AP sites). The sequence is that of 8-oxoguanine DNA glycosylase/AP lyase from Picrophilus torridus (strain ATCC 700027 / DSM 9790 / JCM 10055 / NBRC 100828 / KAW 2/3).